Here is a 74-residue protein sequence, read N- to C-terminus: High-potential iron-sulfur protein isozyme 2 (74 aa).

Residues Cys36, Cys39, Cys53, and Cys67 each coordinate [4Fe-4S] cluster.

In terms of assembly, homodimer.

Specific class of high-redox-potential 4Fe-4S ferredoxins. Functions in anaerobic electron transport in most purple and in some other photosynthetic bacteria and in at least one genus (Paracoccus) of halophilic, denitrifying bacteria. The sequence is that of High-potential iron-sulfur protein isozyme 2 from Ectothiorhodospira mobilis.